Here is a 688-residue protein sequence, read N- to C-terminus: Eukaryotic translation initiation factor 3 subunit B (688 aa).

The interval 1 to 28 is disordered; that stretch reads MAKKKGDQYDSDGAEDQDYDEEPVFEDP. Positions 9-25 are enriched in acidic residues; it reads YDSDGAEDQDYDEEPVF. Residues 57–141 form the RRM domain; it reads NVIVVDNIPV…HTLLVNLFSD (85 aa). WD repeat units follow at residues 208–246, 247–287, 291–329, 332–367, 440–482, and 527–572; these read RERF…KINK, FAHS…EKRS, DGSS…LLDK, IKVQ…TLLE, EVKE…EPTM, and GDHY…KRVN. Residues 612-643 are a coiled coil; that stretch reads DRVRMTRASKELLEKRAKLREQFVEYRAKRVN.

The protein belongs to the eIF-3 subunit B family. As to quaternary structure, component of the eukaryotic translation initiation factor 3 (eIF-3) complex.

The protein localises to the cytoplasm. Functionally, RNA-binding component of the eukaryotic translation initiation factor 3 (eIF-3) complex, which is involved in protein synthesis of a specialized repertoire of mRNAs and, together with other initiation factors, stimulates binding of mRNA and methionyl-tRNAi to the 40S ribosome. The eIF-3 complex specifically targets and initiates translation of a subset of mRNAs involved in cell proliferation. The protein is Eukaryotic translation initiation factor 3 subunit B of Culex quinquefasciatus (Southern house mosquito).